A 127-amino-acid polypeptide reads, in one-letter code: MNTPKELRYSKEHEWVRVEGDKVRIGITDFAQSELGDIVFVELPEVGTEITANEPFGSVESVKTVSELYAPISGTIVEVNESLNDNPEYVNESPYEKAWMIVIEPKDLSEVDNLLTAEQYAAMVNEG.

Residues Lys-22 to Glu-104 form the Lipoyl-binding domain. Residue Lys-63 is modified to N6-lipoyllysine.

The protein belongs to the GcvH family. The glycine cleavage system is composed of four proteins: P, T, L and H. Requires (R)-lipoate as cofactor.

In terms of biological role, the glycine cleavage system catalyzes the degradation of glycine. The H protein shuttles the methylamine group of glycine from the P protein to the T protein. Functionally, is also involved in protein lipoylation via its role as an octanoyl/lipoyl carrier protein intermediate. The chain is Glycine cleavage system H protein from Geobacillus thermodenitrificans (strain NG80-2).